A 658-amino-acid polypeptide reads, in one-letter code: Interferon-induced GTP-binding protein Mx1 (658 aa).

Methionine 1 bears the N-acetylmethionine mark. The segment at 1–20 is disordered; sequence MVNSKGKITDSDPGSSHLLL. A Dynamin-type G domain is found at 65 to 338; the sequence is DLALPAIAVI…LITHICKTLP (274 aa). Residues 75 to 82 form a G1 motif region; it reads GDQSSGKS. 75–82 provides a ligand contact to GTP; that stretch reads GDQSSGKS. The G2 motif stretch occupies residues 100 to 102; that stretch reads VTR. The interval 176-179 is G3 motif; the sequence is DLPG. GTP-binding positions include 176–180 and 245–248; these read DLPGI and TKPD. Residues 245 to 248 form a G4 motif region; the sequence is TKPD. The interval 277-280 is G5 motif; it reads KCRG. The segment at 339–364 is bundle signaling element (BSE); sequence LLENQIKENYEKITEELQKYGSDVPE. The tract at residues 364–531 is middle domain; the sequence is EEEHEKMFFL…HFQMEQIVYC (168 aa). The tract at residues 365–628 is stalk; sequence EEHEKMFFLI…KDTHNWLLKE (264 aa). The tract at residues 551–554 is critical for lipid-binding; the sequence is KDRK. One can recognise a GED domain in the interval 570-658; sequence LSDIFEHLLA…ARRRLAKFPG (89 aa).

It belongs to the TRAFAC class dynamin-like GTPase superfamily. Dynamin/Fzo/YdjA family. As to quaternary structure, homooligomer. Oligomerizes into multimeric filamentous or ring-like structures by virtue of its stalk domain. Oligomerization is critical for GTPase activity, protein stability, and recognition of viral target structures. Interacts with TRPC1, TRPC3, TRPC4, TRPC5, TRPC6 and TRPC7. Interacts with HSPA5. Interacts with TUBB/TUBB5. Interacts with DDX39A and DDX39B. ISGylated.

It is found in the cytoplasm. The protein resides in the endoplasmic reticulum membrane. Its subcellular location is the perinuclear region. Its function is as follows. Interferon-induced dynamin-like GTPase with antiviral activity. The chain is Interferon-induced GTP-binding protein Mx1 (MX1) from Eumetopias jubatus (Steller sea lion).